The chain runs to 166 residues: MEMSNAQRLILSNQYKLMSQLDPENAEKYQRFQTIVERGYELQMRELNKDYGCITEALCKEIIDVMEMYHAMQESFRMLDADESTQVDQRRLQFLGFDIASEAQLVHYVRFLTESEGLYPQFDKGDHHFNSQMPMLEKYRRMLATWRKCPRQYHLCATELRQIFNA.

The protein belongs to the UPF0304 family.

The sequence is that of UPF0304 protein VV1_2093 from Vibrio vulnificus (strain CMCP6).